The primary structure comprises 197 residues: Protein U63 (197 aa).

This sequence belongs to the herpesviridae UL92 family.

In Elephas maximus (Indian elephant), this protein is Protein U63.